The following is a 402-amino-acid chain: MSLEGIGFGYRERAPYASNPAFSRGRLVPEPESPTRTPFQRDRDRIIHSTAFRRLKHKTQVFIAHEGDHYRTRLTHTIEVAQIARALARALRLDEDLAEAVALVHDFGHTPFGHTGEDALNERMENFGGFDHNAQSLRIVTKLEHRYADFDGLNLSWETLEGLVKHNGPLLGPYAAHPDIPVPQPILDFNARYDLELSRFASLEAQCAAIADDIAYNAHDIDDGLRAGLLTLESLDEVPLAKRLLDIVRTRYPNLDPVRTGHELVRRQITIMVEDVIEEAQRRLASARPGTMEDVHNQPRALVGFSDAMRAEEKVLKRFLFKNLYFHESVVVRRHAADRIVQDLFDACFTDPSLMPDEWRLGCEALDKAALARRVADYLAGMTDNYAVREHRRLFDRTPDLA.

A disordered region spans residues 20 to 39 (PAFSRGRLVPEPESPTRTPF). In terms of domain architecture, HD spans 73 to 217 (RLTHTIEVAQ…AAIADDIAYN (145 aa)).

This sequence belongs to the dGTPase family. Type 2 subfamily.

The protein is Deoxyguanosinetriphosphate triphosphohydrolase-like protein of Brucella ovis (strain ATCC 25840 / 63/290 / NCTC 10512).